The primary structure comprises 505 residues: Ikaros family zinc finger protein (505 aa).

C2H2-type zinc fingers lie at residues 18 to 40 (LTCE…KRSH), 46 to 68 (FQCN…VKLH), 74 to 96 (FKCS…IRTH), and 102 to 128 (YKCN…PGFH). Polar residues-rich tracts occupy residues 262 to 273 (FLNTPSPVTRSA) and 309 to 327 (RFQH…SQQP). Disordered stretches follow at residues 262-296 (FLNT…DIGS) and 309-440 (RFQH…VSGS). The span at 336-345 (ILGGSLGGIC) shows a compositional bias: gly residues. Residues 366–377 (ATSSPSNSCPDS) show a composition bias toward polar residues. Over residues 393 to 406 (GSGSSTSRPNGSTG) the composition is skewed to low complexity. The span at 409 to 419 (HRPEMHQDNGR) shows a compositional bias: basic and acidic residues. Positions 424–439 (SGASDSSSLPTYNVSG) are enriched in polar residues. 2 consecutive C2H2-type zinc fingers follow at residues 448–470 (YPCH…MGCH) and 476–500 (FECN…RGEH).

It belongs to the Ikaros C2H2-type zinc-finger protein family. In terms of assembly, heterodimer and homodimer with other IKAROS family members. As to expression, expression is strongest in the blood, gills and intestine.

Its subcellular location is the nucleus. This Myxine glutinosa (Atlantic hagfish) protein is Ikaros family zinc finger protein.